A 195-amino-acid chain; its full sequence is C2 domain-containing protein DDB_G0290753 (195 aa).

Residues 38–161 enclose the C2 domain; that stretch reads KKLTKETKFE…NIKKYSYTFK (124 aa). Ca(2+)-binding residues include aspartate 72, aspartate 78, aspartate 131, aspartate 133, and aspartate 139.

Ca(2+) is required as a cofactor.

The chain is C2 domain-containing protein DDB_G0290753 from Dictyostelium discoideum (Social amoeba).